A 349-amino-acid chain; its full sequence is UDP-3-O-acylglucosamine N-acyltransferase (349 aa).

The Proton acceptor role is filled by His-243.

Belongs to the transferase hexapeptide repeat family. LpxD subfamily. In terms of assembly, homotrimer.

The catalysed reaction is a UDP-3-O-[(3R)-3-hydroxyacyl]-alpha-D-glucosamine + a (3R)-hydroxyacyl-[ACP] = a UDP-2-N,3-O-bis[(3R)-3-hydroxyacyl]-alpha-D-glucosamine + holo-[ACP] + H(+). It participates in bacterial outer membrane biogenesis; LPS lipid A biosynthesis. Its function is as follows. Catalyzes the N-acylation of UDP-3-O-acylglucosamine using 3-hydroxyacyl-ACP as the acyl donor. Is involved in the biosynthesis of lipid A, a phosphorylated glycolipid that anchors the lipopolysaccharide to the outer membrane of the cell. This chain is UDP-3-O-acylglucosamine N-acyltransferase, found in Myxococcus xanthus (strain DK1622).